We begin with the raw amino-acid sequence, 386 residues long: Delta(7)-sterol 5(6)-desaturase (386 aa).

3 consecutive transmembrane segments (helical) span residues 119-139 (VLSLFIITTLFGWLLYFIVAY), 172-192 (IPVMVLLTIPFFLLELHGYSF), and 206-226 (AILWQIPKFILFTDCGIYFLH). One can recognise a Fatty acid hydroxylase domain in the interval 214-337 (FILFTDCGIY…FTTLWDRLGN (124 aa)). A Histidine box-1 motif is present at residues 226–230 (HRWLH). The Histidine box-2 signature appears at 239–243 (HKPHH). A helical membrane pass occupies residues 272-292 (PLLFPLHKVLYLLLFTFVNFW). The Histidine box-3 signature appears at 314–318 (HTVHH).

Belongs to the sterol desaturase family. Fe cation is required as a cofactor.

It is found in the endoplasmic reticulum membrane. The catalysed reaction is a Delta(7)-sterol + 2 Fe(II)-[cytochrome b5] + O2 + 2 H(+) = a Delta(5),Delta(7)-sterol + 2 Fe(III)-[cytochrome b5] + 2 H2O. It participates in steroid metabolism; ergosterol biosynthesis; ergosterol from zymosterol: step 3/5. Functionally, catalyzes the introduction of a C-5 double bond in the B ring of ergosterol. May contribute to the regulation of ergosterol biosynthesis. The polypeptide is Delta(7)-sterol 5(6)-desaturase (ERG3) (Candida dubliniensis (strain CD36 / ATCC MYA-646 / CBS 7987 / NCPF 3949 / NRRL Y-17841) (Yeast)).